Consider the following 180-residue polypeptide: MENRLEERYSKEIAPALVSKFNYKSTMQAPKIEKIVLNMGVGDATQNAKLLDEAVDELTLISGQHPLITKAKKSIAGFRLREGMPIGAKVTLRGERMYDFLDKLINVSLPRVRDFHGISPKSFDGRGNYTLGVKEQLIFPEIDYDKVNRVRGLDVVIVTTANTDEEALELLTQVGMPFAK.

It belongs to the universal ribosomal protein uL5 family. In terms of assembly, part of the 50S ribosomal subunit; part of the 5S rRNA/L5/L18/L25 subcomplex. Contacts the 5S rRNA and the P site tRNA. Forms a bridge to the 30S subunit in the 70S ribosome.

In terms of biological role, this is one of the proteins that bind and probably mediate the attachment of the 5S RNA into the large ribosomal subunit, where it forms part of the central protuberance. In the 70S ribosome it contacts protein S13 of the 30S subunit (bridge B1b), connecting the 2 subunits; this bridge is implicated in subunit movement. Contacts the P site tRNA; the 5S rRNA and some of its associated proteins might help stabilize positioning of ribosome-bound tRNAs. The protein is Large ribosomal subunit protein uL5 of Lacticaseibacillus casei (strain BL23) (Lactobacillus casei).